Consider the following 207-residue polypeptide: Cytochrome c biogenesis ATP-binding export protein CcmA (207 aa).

The region spanning 3-206 (LMAEGLSARR…AKSLEMTGFV (204 aa)) is the ABC transporter domain. Residue 35-42 (GPNGAGKS) participates in ATP binding.

Belongs to the ABC transporter superfamily. CcmA exporter (TC 3.A.1.107) family. In terms of assembly, the complex is composed of two ATP-binding proteins (CcmA) and two transmembrane proteins (CcmB).

The protein localises to the cell inner membrane. The enzyme catalyses heme b(in) + ATP + H2O = heme b(out) + ADP + phosphate + H(+). Part of the ABC transporter complex CcmAB involved in the biogenesis of c-type cytochromes; once thought to export heme, this seems not to be the case, but its exact role is uncertain. Responsible for energy coupling to the transport system. In Rhizobium meliloti (strain 1021) (Ensifer meliloti), this protein is Cytochrome c biogenesis ATP-binding export protein CcmA.